Reading from the N-terminus, the 812-residue chain is G patch domain-containing protein 1 homolog (812 aa).

A disordered region spans residues 1–42; the sequence is MNRKKLAAYGQEFEDDDEEGSSVSKKPTQIHEEIATDEKGKR. The segment covering 29 to 40 has biased composition (basic and acidic residues); sequence QIHEEIATDEKG. The G-patch domain occupies 145–191; sequence SNSIGVRMLRSMGWREGRGIGLANVKQKQKRGGESSEAQFDREQASK. Disordered regions lie at residues 384–416 and 584–812; these read ANEVEKRDNERGGGEAEEDRDRRQRNRIEFPDE and NEIE…EEKK. Residues 586–609 are compositionally biased toward basic and acidic residues; sequence IEMRERLLKSRAQRGAEEKKRNQS. Acidic residues-rich tracts occupy residues 610-630 and 653-668; these read DDDDEKEYDDKDSDEEEENEA and DGADSDESNSEDEEAE. The span at 669–720 shows a compositional bias: basic and acidic residues; sequence EKERQEILKKREEDLKRRREIVEKKEEENRKRVEKELKELENRDLLRVSKQQ. Over residues 761 to 794 the composition is skewed to basic residues; sequence MKKKKKDKKEKEKKKKSKKSKKSKKEKKTKRKHS. Acidic residues predominate over residues 800 to 812; it reads DSGDNSDGWEEKK.

It belongs to the GPATCH1 family.

This Caenorhabditis elegans protein is G patch domain-containing protein 1 homolog.